The chain runs to 98 residues: EKC/KEOPS complex subunit GON7 (98 aa).

Met1 bears the N-acetylmethionine mark. The disordered stretch occupies residues 55–98 (DAQGLAEDPDDALDGDDEDDAEDENNSGRTNSDGPSAKRPKPAS). Over residues 61–79 (EDPDDALDGDDEDDAEDEN) the composition is skewed to acidic residues.

In terms of assembly, component of the EKC/KEOPS complex composed of at least GON7, TP53RK, TPRKB, OSGEP and LAGE3; the whole complex dimerizes.

Its subcellular location is the nucleus. Functionally, component of the EKC/KEOPS complex that is required for the formation of a threonylcarbamoyl group on adenosine at position 37 (t(6)A37) in tRNAs that read codons beginning with adenine. The complex is probably involved in the transfer of the threonylcarbamoyl moiety of threonylcarbamoyl-AMP (TC-AMP) to the N6 group of A37. GON7 plays a supporting role to the catalytic subunit OSGEP in the complex. The protein is EKC/KEOPS complex subunit GON7 of Mus musculus (Mouse).